The sequence spans 248 residues: Probable transcriptional regulatory protein Oant_1200 (248 aa).

This sequence belongs to the TACO1 family.

Its subcellular location is the cytoplasm. The protein is Probable transcriptional regulatory protein Oant_1200 of Brucella anthropi (strain ATCC 49188 / DSM 6882 / CCUG 24695 / JCM 21032 / LMG 3331 / NBRC 15819 / NCTC 12168 / Alc 37) (Ochrobactrum anthropi).